Reading from the N-terminus, the 216-residue chain is Large ribosomal subunit protein uL3 (216 aa).

The tract at residues 134–153 (RATHGNSRSHNVPGSIGMAQ) is disordered. At glutamine 153 the chain carries N5-methylglutamine.

It belongs to the universal ribosomal protein uL3 family. In terms of assembly, part of the 50S ribosomal subunit. Forms a cluster with proteins L14 and L19. In terms of processing, methylated by PrmB.

Functionally, one of the primary rRNA binding proteins, it binds directly near the 3'-end of the 23S rRNA, where it nucleates assembly of the 50S subunit. The polypeptide is Large ribosomal subunit protein uL3 (Cupriavidus pinatubonensis (strain JMP 134 / LMG 1197) (Cupriavidus necator (strain JMP 134))).